Consider the following 92-residue polypeptide: Small ribosomal subunit protein bS20 (92 aa).

A disordered region spans residues 1–22 (MANSPQSKKRARQAEARAAVNK).

This sequence belongs to the bacterial ribosomal protein bS20 family.

Its function is as follows. Binds directly to 16S ribosomal RNA. The protein is Small ribosomal subunit protein bS20 of Cereibacter sphaeroides (strain ATCC 17029 / ATH 2.4.9) (Rhodobacter sphaeroides).